A 487-amino-acid polypeptide reads, in one-letter code: Serine/threonine-protein kinase 4 (487 aa).

M1 bears the N-acetylmethionine mark. Position 3 is a phosphothreonine (T3). Residues 30 to 281 form the Protein kinase domain; it reads FDVLEKLGEG…ATQLLQHPFV (252 aa). ATP-binding positions include 36–44 and K59; that span reads LGEGSYGSV. D149 serves as the catalytic Proton acceptor. T183 is modified (phosphothreonine; by autocatalysis). S265 is modified (phosphoserine). A coiled-coil region spans residues 290-310; sequence LRDLINEAMDVKLKRQEAQQR. The interval 305 to 337 is disordered; that stretch reads QEAQQREVDQDDEENSEEDELDSGTMVRAVGDE. The span at 313–326 shows a compositional bias: acidic residues; that stretch reads DQDDEENSEEDELD. Position 320 is a phosphoserine (S320). 2 positions are modified to phosphothreonine: T340 and T367. T387 is modified (phosphothreonine; by PKB/AKT1). A phosphoserine mark is found at S410 and S414. Y433 carries the post-translational modification Phosphotyrosine. The region spanning 433–480 is the SARAH domain; the sequence is YEFLKSWTVEDLQKRLLALDPMMEQEIEEIRQKYQSKRQPILDAIEAK.

This sequence belongs to the protein kinase superfamily. STE Ser/Thr protein kinase family. STE20 subfamily. As to quaternary structure, homodimer; mediated via the coiled-coil region. Interacts with NORE1, which inhibits autoactivation. Interacts with and stabilizes SAV1. Interacts with RASSF1. Interacts with FOXO3. Interacts with RASSF2 (via SARAH domain). Interacts with AR, PKB/AKT1, TNNI3 and SIRT1. Interacts with DLG5 (via PDZ domain 3). Interacts with MARK3 and SCRIB in the presence of DLG5. Mg(2+) is required as a cofactor. Autophosphorylated on serine and threonine residues. Phosphorylation at Thr-387 by PKB/AKT1, leads to inhibition of its: kinase activity, nuclear translocation and autophosphorylation at Thr-183. It also diminishes its cleavage by caspases and its ability to phosphorylate FOXO3. In terms of processing, proteolytically cleaved by caspase-3 during apoptosis at Asp-326 and Asp-349 resulting in a 37 kDa or a 39 kDa subunit respectively. The 39 kDa subunit is further cleaved into the 37 kDa form. Proteolytic cleavage results in kinase activation and nuclear translocation of the truncated form (MST1/N). It is less likely that cleavage at Asp-349 is a prerequisite for activation as this site is not conserved in the murine ortholog.

It is found in the cytoplasm. The protein localises to the nucleus. It carries out the reaction L-seryl-[protein] + ATP = O-phospho-L-seryl-[protein] + ADP + H(+). The enzyme catalyses L-threonyl-[protein] + ATP = O-phospho-L-threonyl-[protein] + ADP + H(+). Its activity is regulated as follows. Inhibited by the C-terminal non-catalytic region. Activated by caspase-cleavage. Full activation also requires homodimerization and autophosphorylation of Thr-183. Activated by RASSF1 which acts by preventing its dephosphorylation. Its function is as follows. Stress-activated, pro-apoptotic kinase which, following caspase-cleavage, enters the nucleus and induces chromatin condensation followed by internucleosomal DNA fragmentation. Key component of the Hippo signaling pathway which plays a pivotal role in organ size control and tumor suppression by restricting proliferation and promoting apoptosis. The core of this pathway is composed of a kinase cascade wherein STK3/MST2 and STK4/MST1, in complex with its regulatory protein SAV1, phosphorylates and activates LATS1/2 in complex with its regulatory protein MOB1, which in turn phosphorylates and inactivates YAP1 oncoprotein and WWTR1/TAZ. Phosphorylation of YAP1 by LATS2 inhibits its translocation into the nucleus to regulate cellular genes important for cell proliferation, cell death, and cell migration. STK3/MST2 and STK4/MST1 are required to repress proliferation of mature hepatocytes, to prevent activation of facultative adult liver stem cells (oval cells), and to inhibit tumor formation. Phosphorylates 'Ser-14' of histone H2B (H2BS14ph) during apoptosis. Phosphorylates FOXO3 upon oxidative stress, which results in its nuclear translocation and cell death initiation. Phosphorylates MOBKL1A, MOBKL1B and RASSF2. Phosphorylates TNNI3 (cardiac Tn-I) and alters its binding affinity to TNNC1 (cardiac Tn-C) and TNNT2 (cardiac Tn-T). Phosphorylates FOXO1 on 'Ser-212' and regulates its activation and stimulates transcription of PMAIP1 in a FOXO1-dependent manner. Phosphorylates SIRT1 and inhibits SIRT1-mediated p53/TP53 deacetylation, thereby promoting p53/TP53 dependent transcription and apoptosis upon DNA damage. Acts as an inhibitor of PKB/AKT1. Phosphorylates AR on 'Ser-650' and suppresses its activity by intersecting with PKB/AKT1 signaling and antagonizing formation of AR-chromatin complexes. The chain is Serine/threonine-protein kinase 4 (STK4) from Otolemur garnettii (Small-eared galago).